We begin with the raw amino-acid sequence, 319 residues long: Protease HtpX homolog (319 aa).

Helical transmembrane passes span 6–26 and 28–48; these read TAMLLAFMTVLFMAVGYVIGG and GGMMIALVIAAGMNFFSYWNS. Zn(2+) is bound at residue histidine 130. Glutamate 131 is a catalytic residue. Zn(2+) is bound at residue histidine 134. 2 helical membrane-spanning segments follow: residues 145–165 and 172–192; these read MTATLAGAISMLGNFAFFFGG and PLGFIGVLIAMIVAPLAAALV. Glutamate 201 contacts Zn(2+). Residues 280–319 are disordered; that stretch reads EMSTGSTAPVRPDNAVRKSRSVPRTGWGRGGSEPPKGPWS.

This sequence belongs to the peptidase M48B family. Zn(2+) serves as cofactor.

Its subcellular location is the cell inner membrane. This Sinorhizobium medicae (strain WSM419) (Ensifer medicae) protein is Protease HtpX homolog.